The sequence spans 532 residues: Probable NAD kinase 1 (532 aa).

Over residues 1–26 the composition is skewed to basic and acidic residues; that stretch reads MSLDELPHKVSDERVNHDTVTSHESE. The tract at residues 1–32 is disordered; it reads MSLDELPHKVSDERVNHDTVTSHESEIGSGSI.

This sequence belongs to the NAD kinase family.

It carries out the reaction NAD(+) + ATP = ADP + NADP(+) + H(+). This Oryza sativa subsp. japonica (Rice) protein is Probable NAD kinase 1.